The sequence spans 988 residues: Protein argonaute 10 (988 aa).

Residues 1-11 (MPIRQMKDSSE) show a composition bias toward basic and acidic residues. The disordered stretch occupies residues 1–103 (MPIRQMKDSS…PPSQTTSSAV (103 aa)). Residues 41 to 57 (PVTVTTPATVTQSQASS) show a composition bias toward low complexity. The span at 64–73 (NRSRRRNRGG) shows a compositional bias: basic residues. The PAZ domain occupies 338–451 (PVIEFVAQLL…LPMEACKIVE (114 aa)). One can recognise a Piwi domain in the interval 625-946 (LLLAILPDNN…AAFRARFYLE (322 aa)).

The protein belongs to the argonaute family. Ago subfamily. As to quaternary structure, interacts with GATA18/HAN and KNAT1/BP. Interacts with RICE1 and RICE2 that act as cofactors. As to expression, expressed in roots, stems, leaves, developing embryo, siliques, inflorescences, provascular tissue, shoot apical meristem (SAM) and adaxial (upper) sides of lateral organ primordia. Observed in the floral meristem, the adaxial side of sepal primordia, and the provascular tissue.

The protein resides in the cytoplasm. Involved in RNA-mediated post-transcriptional gene silencing (PTGS). Main component of the RNA-induced silencing complex (RISC) that binds to a short guide RNA such as a microRNA (miRNA) or small interfering RNA (siRNA). RISC uses the mature miRNA or siRNA as a guide for slicer-directed cleavage of homologous mRNAs to repress gene expression. Required for reliable formation of primary and axillary shoot apical meristems. Specifies leaf adaxial identity by repressing the miR165 and miR166 microRNAs in the embryonic shoot apex, in the shoot apical meristem (SAM) and leaf. Represses the microRNA miR398 which targets CCS1 chaperone mRNAs for translational inhibition. Acts as a negative regulator of AGO1 protein level. Like AGO1, is required for stem cell function and organ polarity. Unlike AGO1, is not subjected to small RNA-mediated repression itself. Essential for multiple processes in development. Coregulates, with GATA18/HAN, the shoot apical meristem (SAM) organization. This chain is Protein argonaute 10, found in Arabidopsis thaliana (Mouse-ear cress).